Consider the following 268-residue polypeptide: MSSDSSREENVYLAKLAEQAERYEEMVEFMEKVAKTVETEELTVEERNLLSVAYKNVIGARRASWRIISSIEQKEDSRGNSDHVSIIKDYRGKIETELSKICDGILNLLEAHLIPAASLAESKVFYLKMKGDYHRYLAEFKTGAERKEAAESTLVAYKSAQDIALADLAPTHPIRLGLALNFSVFYYEILNSSDRACSLAKQAFDEAISELDTLGEESYKDSTLIMQLLRDNLTLWTSDLNDEAGDDIKEAPKEVQKVDEQAQPPPSQ.

2 positions are modified to phosphoserine: S69 and S192. T213 is subject to Phosphothreonine. Residues 243–268 (EAGDDIKEAPKEVQKVDEQAQPPPSQ) form a disordered region. The span at 246 to 260 (DDIKEAPKEVQKVDE) shows a compositional bias: basic and acidic residues. S267 bears the Phosphoserine mark.

This sequence belongs to the 14-3-3 family. As to quaternary structure, interacts with EDE1. Interacts with DREB1A and DREB1B in the nucleus. Interacts with CINV1.

The protein resides in the cytoplasm. Its subcellular location is the nucleus. Is associated with a DNA binding complex that binds to the G box, a well-characterized cis-acting DNA regulatory element found in plant genes. May be involved in cell cycle regulation by binding to soluble EDE1 and sequestering it in an inactive form during the early stages of mitosis. This is 14-3-3-like protein GF14 upsilon (GRF5) from Arabidopsis thaliana (Mouse-ear cress).